Consider the following 697-residue polypeptide: MSKKLENIRNIGICAHIDAGKTTTTERILYYTGKSHKIGEVHEGGATMDWMEQEQERGITITSAATTCRWQDKQINIIDTPGHVDFTIEVERSLRVLDGAVAVFDGVAGVEPQSETVWRQADKYNVPRMCFVNKMDRMGADFYRCVDMIKDRLGAKPLVIQLPIGIEENFKGVVDLVKMQAVVWKDESLGAEYSYQEIPDDMKAKAEEYRANLLDMVVELDDKIMEKYLSGEEVTEEEIKKLIRKGTISAAFYPVLCGSAFKNKGVQPLLDAVVDYLPSPIDIATVKGVEVSTGEEKDFPISVSEPFSALAFKIMNDPFVGSLTFIRVYSGKITSGTTVINTVKNKREKIGRMLLMHANNREDVKEASAGDIVALAGLKDTTTGDTLSDEDKKVILERMEFPEPVIELAVEPKSKVDQEKMGLALSRLAAEDPSFRTSTDQETGQTVIKGMGELHLEIIIDRMRREFKVEANIGAPQVAYRETITKACEIDYTHKKQSGGAGQFARVKIIFEPLKDVKDLKEEDKNKSFIFESKIVGGAVPKEYIPGVEKGLNNIRETGVIAGYPMIDFKATLIDGAFHDVDSSVLAFEIAAKAAFREGMPKGNPKLLEPIMKVEVITPDEYMGDVIGDLNSRRGQVQGMEPRGNAQVIKAYVPLAEMFGYVNTLRSLSQGRAQYSMVFNHYDQVPTQVADTIKAKK.

Positions 6-281 constitute a tr-type G domain; sequence ENIRNIGICA…AVVDYLPSPI (276 aa). GTP-binding positions include 15–22, 79–83, and 133–136; these read AHIDAGKT, DTPGH, and NKMD.

Belongs to the TRAFAC class translation factor GTPase superfamily. Classic translation factor GTPase family. EF-G/EF-2 subfamily.

It localises to the cytoplasm. Catalyzes the GTP-dependent ribosomal translocation step during translation elongation. During this step, the ribosome changes from the pre-translocational (PRE) to the post-translocational (POST) state as the newly formed A-site-bound peptidyl-tRNA and P-site-bound deacylated tRNA move to the P and E sites, respectively. Catalyzes the coordinated movement of the two tRNA molecules, the mRNA and conformational changes in the ribosome. In Rickettsia bellii (strain OSU 85-389), this protein is Elongation factor G.